The following is a 119-amino-acid chain: Large ribosomal subunit protein bL20 (119 aa).

This sequence belongs to the bacterial ribosomal protein bL20 family.

In terms of biological role, binds directly to 23S ribosomal RNA and is necessary for the in vitro assembly process of the 50S ribosomal subunit. It is not involved in the protein synthesizing functions of that subunit. This Gloeobacter violaceus (strain ATCC 29082 / PCC 7421) protein is Large ribosomal subunit protein bL20.